A 366-amino-acid chain; its full sequence is tRNA/tmRNA (uracil-C(5))-methyltransferase (366 aa).

5 residues coordinate S-adenosyl-L-methionine: Q190, Y218, N223, E239, and D299. The active-site Nucleophile is C324. The active-site Proton acceptor is E358.

It belongs to the class I-like SAM-binding methyltransferase superfamily. RNA M5U methyltransferase family. TrmA subfamily.

The enzyme catalyses uridine(54) in tRNA + S-adenosyl-L-methionine = 5-methyluridine(54) in tRNA + S-adenosyl-L-homocysteine + H(+). It catalyses the reaction uridine(341) in tmRNA + S-adenosyl-L-methionine = 5-methyluridine(341) in tmRNA + S-adenosyl-L-homocysteine + H(+). In terms of biological role, dual-specificity methyltransferase that catalyzes the formation of 5-methyluridine at position 54 (m5U54) in all tRNAs, and that of position 341 (m5U341) in tmRNA (transfer-mRNA). The protein is tRNA/tmRNA (uracil-C(5))-methyltransferase of Salmonella choleraesuis (strain SC-B67).